The primary structure comprises 443 residues: Probable glycine dehydrogenase (decarboxylating) subunit 1 (443 aa).

The protein belongs to the GcvP family. N-terminal subunit subfamily. As to quaternary structure, the glycine cleavage system is composed of four proteins: P, T, L and H. In this organism, the P 'protein' is a heterodimer of two subunits.

It catalyses the reaction N(6)-[(R)-lipoyl]-L-lysyl-[glycine-cleavage complex H protein] + glycine + H(+) = N(6)-[(R)-S(8)-aminomethyldihydrolipoyl]-L-lysyl-[glycine-cleavage complex H protein] + CO2. Its function is as follows. The glycine cleavage system catalyzes the degradation of glycine. The P protein binds the alpha-amino group of glycine through its pyridoxal phosphate cofactor; CO(2) is released and the remaining methylamine moiety is then transferred to the lipoamide cofactor of the H protein. This is Probable glycine dehydrogenase (decarboxylating) subunit 1 from Nitratidesulfovibrio vulgaris (strain DP4) (Desulfovibrio vulgaris).